The following is a 173-amino-acid chain: Protein tyrosine phosphatase type IVA 3 (173 aa).

One can recognise a Tyrosine-protein phosphatase domain in the interval 8-161 (APVEVSYRHM…YRPKQRLRFK (154 aa)). Cysteine 49 and cysteine 104 form a disulfide bridge. Catalysis depends on aspartate 72, which acts as the Proton donor. The active-site Phosphocysteine intermediate is cysteine 104. Position 110 (arginine 110) interacts with substrate. Cysteine 170 carries the cysteine methyl ester modification. A lipid anchor (S-farnesyl cysteine) is attached at cysteine 170. Residues 171–173 (CVM) constitute a propeptide, removed in mature form.

The protein belongs to the protein-tyrosine phosphatase family. Interacts with tubulin. Farnesylated. Farnesylation is required for membrane targeting. Unfarnesylated forms are shifted into the nucleus. Present in the small intestine, where it is located in the differentiated epithelial cells of the villus but not in the proliferating crypt cells (at protein level). Expressed in heart and skeletal muscle, and at lower levels in lung, spleen and testis.

It is found in the cell membrane. Its subcellular location is the early endosome. It carries out the reaction O-phospho-L-tyrosyl-[protein] + H2O = L-tyrosyl-[protein] + phosphate. Inhibited by sodium orthovanadate and peroxovanadium compounds, and by pentamidine. Protein tyrosine phosphatase which stimulates progression from G1 into S phase during mitosis. Enhances cell proliferation, cell motility and invasive activity, and promotes cancer metastasis. May be involved in the progression of cardiac hypertrophy by inhibiting intracellular calcium mobilization in response to angiotensin II. This is Protein tyrosine phosphatase type IVA 3 (Ptp4a3) from Mus musculus (Mouse).